We begin with the raw amino-acid sequence, 119 residues long: MPRFDASGLITAIVTDARDGELLMVAHMNEEALRLTLETGIAHYWSRSRKTLWKKGETSGNLQSVVELRTDCDQDALWLKVHVAGDGPTCHTGRRSCFYRQVVSSGGKVALTMASDHDQ.

Asp71 is a binding site for Mg(2+). Residue Cys72 participates in Zn(2+) binding. 2 residues coordinate Mg(2+): Asp73 and Asp75. Zn(2+) is bound by residues Cys90 and Cys97.

The protein belongs to the PRA-CH family. In terms of assembly, homodimer. Mg(2+) serves as cofactor. The cofactor is Zn(2+).

Its subcellular location is the cytoplasm. The enzyme catalyses 1-(5-phospho-beta-D-ribosyl)-5'-AMP + H2O = 1-(5-phospho-beta-D-ribosyl)-5-[(5-phospho-beta-D-ribosylamino)methylideneamino]imidazole-4-carboxamide. It functions in the pathway amino-acid biosynthesis; L-histidine biosynthesis; L-histidine from 5-phospho-alpha-D-ribose 1-diphosphate: step 3/9. In terms of biological role, catalyzes the hydrolysis of the adenine ring of phosphoribosyl-AMP. This is Phosphoribosyl-AMP cyclohydrolase from Brucella abortus (strain 2308).